The following is a 250-amino-acid chain: Vacuolar protein sorting-associated protein 22 homolog 1 (250 aa).

A coiled-coil region spans residues 35 to 55 (MKEQLSTFRSQLEEFARKHKN).

Belongs to the SNF8 family. As to quaternary structure, component of the endosomal sorting complex required for transport II (ESCRT-II), composed of VPS22, VPS25 and VPS36.

It is found in the endosome. Functionally, component of the endosomal sorting complex required for transport II (ESCRT-II), which is required for multivesicular body (MVB) formation and sorting of endosomal cargo proteins into MVBs. The ESCRT-II complex is probably involved in the recruitment of the ESCRT-III complex. The chain is Vacuolar protein sorting-associated protein 22 homolog 1 (VP22-1) from Arabidopsis thaliana (Mouse-ear cress).